The following is a 316-amino-acid chain: Beta-agarase (316 aa).

The signal sequence occupies residues 1-18 (MKRKLFTICLASLQFACA). Positions 27-315 (YEWDIYPVPA…WIRVYTLVPE (289 aa)) constitute a GH16 domain. Substrate-binding positions include W78, 87–97 (QRDHVSVSDGF), and 101–103 (RAS). E167 acts as the Nucleophile in catalysis. E172 (proton donor) is an active-site residue. R197 serves as a coordination point for substrate.

It belongs to the glycosyl hydrolase 16 family.

The catalysed reaction is Hydrolysis of (1-&gt;4)-beta-D-galactosidic linkages in agarose, giving the tetramer as the predominant product.. Its function is as follows. Cleaves the beta-1,4-linkages between beta-D-galactose and alpha-L-3,6-anhydro-galactose residues in agarose. Cleaves agarose in a random manner with retention of the anomeric-bond configuration, producing beta-anomers that give rise progressively to alpha-anomers when mutarotation takes place. The chain is Beta-agarase from Phocaeicola plebeius (strain DSM 17135 / JCM 12973 / CCUG 54634 / M2) (Bacteroides plebeius).